Reading from the N-terminus, the 153-residue chain is 6,7-dimethyl-8-ribityllumazine synthase (153 aa).

5-amino-6-(D-ribitylamino)uracil is bound by residues phenylalanine 22, 56 to 58 (AFE), and 80 to 82 (AVI). Residue 85-86 (AT) participates in (2S)-2-hydroxy-3-oxobutyl phosphate binding. The active-site Proton donor is the histidine 88. Phenylalanine 113 provides a ligand contact to 5-amino-6-(D-ribitylamino)uracil. Arginine 127 contacts (2S)-2-hydroxy-3-oxobutyl phosphate.

Belongs to the DMRL synthase family.

The enzyme catalyses (2S)-2-hydroxy-3-oxobutyl phosphate + 5-amino-6-(D-ribitylamino)uracil = 6,7-dimethyl-8-(1-D-ribityl)lumazine + phosphate + 2 H2O + H(+). It participates in cofactor biosynthesis; riboflavin biosynthesis; riboflavin from 2-hydroxy-3-oxobutyl phosphate and 5-amino-6-(D-ribitylamino)uracil: step 1/2. In terms of biological role, catalyzes the formation of 6,7-dimethyl-8-ribityllumazine by condensation of 5-amino-6-(D-ribitylamino)uracil with 3,4-dihydroxy-2-butanone 4-phosphate. This is the penultimate step in the biosynthesis of riboflavin. The chain is 6,7-dimethyl-8-ribityllumazine synthase from Clostridium tetani (strain Massachusetts / E88).